Reading from the N-terminus, the 586-residue chain is Nucleus accumbens-associated protein 2 (586 aa).

A BTB domain is found at 30–94 (CDVSIVVKGQ…CYTGKLTMAA (65 aa)). K171 participates in a covalent cross-link: Glycyl lysine isopeptide (Lys-Gly) (interchain with G-Cter in SUMO2). Residues 177-196 (MPPASGPGLASKRPLETGPR) are disordered. K215 participates in a covalent cross-link: Glycyl lysine isopeptide (Lys-Gly) (interchain with G-Cter in SUMO2). Residues 236–272 (QVPYPPGERTSPGASSLPTTDSPTSYHNEEDEEDDEA) form a disordered region. Polar residues predominate over residues 247–261 (PGASSLPTTDSPTSY). Residues K297, K427, and K454 each participate in a glycyl lysine isopeptide (Lys-Gly) (interchain with G-Cter in SUMO2) cross-link. The 98-residue stretch at 349-446 (GSGVYITRGQ…DMCTNARRVR (98 aa)) folds into the BEN domain. The interval 542-586 (APEQLPADGQSSPQAFEQGNTSSSRPQTPVATATRRPEGTYAGTL) is disordered. Residues 550–572 (GQSSPQAFEQGNTSSSRPQTPVA) show a composition bias toward polar residues.

Homooligomer; mediated by the BTB domain. Interacts with the NuRD complex. Interacts (via C-terminal part) with HDAC2. Interacts (via BTB domain) with MTA1, MTA2 and MTA3.

The protein localises to the nucleus. Functions as a transcriptional repressor through its association with the NuRD complex. Recruits the NuRD complex to the promoter of MDM2, leading to the repression of MDM2 transcription and subsequent stability of p53/TP53. The protein is Nucleus accumbens-associated protein 2 (Nacc2) of Mus musculus (Mouse).